Reading from the N-terminus, the 198-residue chain is Photosystem I assembly protein Ycf4 (198 aa).

The disordered stretch occupies residues 1-20; that stretch reads MTASTTINKGDSPNGDSSAS. A run of 2 helical transmembrane segments spans residues 38–58 and 78–98; these read WASI…SSYL and LVMG…WLAI.

This sequence belongs to the Ycf4 family.

Its subcellular location is the cellular thylakoid membrane. Its function is as follows. Seems to be required for the assembly of the photosystem I complex. The polypeptide is Photosystem I assembly protein Ycf4 (Trichormus variabilis (strain ATCC 29413 / PCC 7937) (Anabaena variabilis)).